The sequence spans 602 residues: MTKEIDINKLLAQENNALNTILSQVNELCEQNKQLQGLIEIQNETKALEKEYNRSLPWFKRFVNTVSNVKYIFIKSEEQLTNEAIKYNNKILKDIDNKIYNIAEKSVSLKQELQEEIEKNFKDLTKKDLSKDQRERLSEVFFSYKSKPERFSALHMTNPLQFINAEELEKQYNSLNATKQNIQNLISENSNVKELKEIQKQVAEIREEVPYTFFEKLNNIWQNVKNVFVNNSEQVLAKNKESNTRTIRKIDEQLYKTKHKFEELIENKERNINDIIAKLPDNEELQKIVSNLTNHMASTKEPILTNSSLAKPLENNITPPPPLPGNNIPSPPPPPPPLPGNNIPSPPPPPPPLPGNNIPSPPPPPPPLPGNNIPSPPPPPPPLSGNNIPSPPPPPPPLSGNNIPSPPPPPPPLPGNNIPSPPPPPPPLSQNNIPPPPPPPMAPVSAQTEKLSKPVEATTVKKPENQPRPSIDTSDLMREIAGPKKLRKVEETDVKVQDSRDLLLQSIRGEHKLKKVEFDPNTGKPVAHSHSKPVQNVNKLSGVASILARRVVMEMSDSSGSESDSGNWSDVGVNRNTKTLKTKRERRKILNNRNSQKPSFVK.

3 disordered regions span residues 307–484, 516–535, and 555–602; these read SSLA…AGPK, VEFD…KPVQ, and MSDS…SFVK. Pro residues predominate over residues 318–442; sequence TPPPPLPGNN…IPPPPPPPMA (125 aa). 2 consecutive WH2 domains span residues 472–489 and 499–516; these read DTSD…LRKV and SRDL…LKKV. A compositionally biased stretch (basic and acidic residues) spans 475–484; it reads DLMREIAGPK. The interval 537–570 is central and acidic domains; the sequence is VNKLSGVASILARRVVMEMSDSSGSESDSGNWSD. Low complexity predominate over residues 555–566; the sequence is MSDSSGSESDSG. Residues 578 to 590 show a composition bias toward basic residues; sequence KTLKTKRERRKIL. The segment covering 591–602 has biased composition (polar residues); sequence NNRNSQKPSFVK.

Homodimer.

It localises to the cell surface. In terms of biological role, recruits and activates the Arp2/3 complex, which in turn leads to actin polymerization, promoting Rickettsia motility during infection. This chain is Arp2/3 complex-activating protein rickA (rickA), found in Rickettsia montanensis.